A 300-amino-acid polypeptide reads, in one-letter code: GTPase Era (300 aa).

Residues 8–176 enclose the Era-type G domain; the sequence is RCGYVAIVGR…EAQIAKHLPE (169 aa). Residues 16–23 are G1; it reads GRPNVGKS. Position 16-23 (16-23) interacts with GTP; that stretch reads GRPNVGKS. A G2 region spans residues 42–46; the sequence is QTTRH. The tract at residues 63–66 is G3; it reads DTPG. GTP is bound by residues 63–67 and 125–128; these read DTPGM and NKTD. A G4 region spans residues 125-128; the sequence is NKTD. The tract at residues 155–157 is G5; the sequence is ISA. Positions 199 to 283 constitute a KH type-2 domain; sequence VREKIMRQLG…MLNLWVKVKG (85 aa).

Belongs to the TRAFAC class TrmE-Era-EngA-EngB-Septin-like GTPase superfamily. Era GTPase family. As to quaternary structure, monomer.

It is found in the cytoplasm. The protein localises to the cell inner membrane. Functionally, an essential GTPase that binds both GDP and GTP, with rapid nucleotide exchange. Plays a role in 16S rRNA processing and 30S ribosomal subunit biogenesis and possibly also in cell cycle regulation and energy metabolism. The polypeptide is GTPase Era (Pseudomonas entomophila (strain L48)).